A 698-amino-acid polypeptide reads, in one-letter code: Ion-translocating oxidoreductase complex subunit C (698 aa).

4Fe-4S ferredoxin-type domains are found at residues 366–397 (TEMG…QQLY) and 407–436 (KARN…VQYY). [4Fe-4S] cluster is bound by residues cysteine 377, cysteine 380, cysteine 383, cysteine 387, cysteine 416, cysteine 419, cysteine 422, and cysteine 426.

The protein belongs to the 4Fe4S bacterial-type ferredoxin family. RnfC subfamily. As to quaternary structure, the complex is composed of six subunits: RnfA, RnfB, RnfC, RnfD, RnfE and RnfG. [4Fe-4S] cluster serves as cofactor.

The protein localises to the cell inner membrane. Part of a membrane-bound complex that couples electron transfer with translocation of ions across the membrane. The protein is Ion-translocating oxidoreductase complex subunit C of Yersinia pseudotuberculosis serotype O:1b (strain IP 31758).